The following is a 248-amino-acid chain: 3-deoxy-manno-octulosonate cytidylyltransferase (248 aa).

Belongs to the KdsB family.

It localises to the cytoplasm. The enzyme catalyses 3-deoxy-alpha-D-manno-oct-2-ulosonate + CTP = CMP-3-deoxy-beta-D-manno-octulosonate + diphosphate. It participates in nucleotide-sugar biosynthesis; CMP-3-deoxy-D-manno-octulosonate biosynthesis; CMP-3-deoxy-D-manno-octulosonate from 3-deoxy-D-manno-octulosonate and CTP: step 1/1. It functions in the pathway bacterial outer membrane biogenesis; lipopolysaccharide biosynthesis. Functionally, activates KDO (a required 8-carbon sugar) for incorporation into bacterial lipopolysaccharide in Gram-negative bacteria. The protein is 3-deoxy-manno-octulosonate cytidylyltransferase of Salmonella arizonae (strain ATCC BAA-731 / CDC346-86 / RSK2980).